A 379-amino-acid polypeptide reads, in one-letter code: Homoserine O-succinyltransferase (379 aa).

Positions 51 to 360 constitute an AB hydrolase-1 domain; sequence NAVLICHALS…DSPYGHDAFL (310 aa). Ser-157 acts as the Nucleophile in catalysis. Substrate is bound at residue Arg-227. Active-site residues include Asp-323 and His-356. Position 357 (Asp-357) interacts with substrate.

The protein belongs to the AB hydrolase superfamily. MetX family. Homodimer.

It localises to the cytoplasm. The catalysed reaction is L-homoserine + succinyl-CoA = O-succinyl-L-homoserine + CoA. It functions in the pathway amino-acid biosynthesis; L-methionine biosynthesis via de novo pathway; O-succinyl-L-homoserine from L-homoserine: step 1/1. Transfers a succinyl group from succinyl-CoA to L-homoserine, forming succinyl-L-homoserine. This chain is Homoserine O-succinyltransferase, found in Pseudomonas entomophila (strain L48).